The following is a 117-amino-acid chain: Large ribosomal subunit protein bL20 (117 aa).

This sequence belongs to the bacterial ribosomal protein bL20 family.

Binds directly to 23S ribosomal RNA and is necessary for the in vitro assembly process of the 50S ribosomal subunit. It is not involved in the protein synthesizing functions of that subunit. The protein is Large ribosomal subunit protein bL20 of Campylobacter jejuni subsp. jejuni serotype O:2 (strain ATCC 700819 / NCTC 11168).